Here is a 180-residue protein sequence, read N- to C-terminus: Large ribosomal subunit protein uL6 (180 aa).

It belongs to the universal ribosomal protein uL6 family. Part of the 50S ribosomal subunit.

In terms of biological role, this protein binds to the 23S rRNA, and is important in its secondary structure. It is located near the subunit interface in the base of the L7/L12 stalk, and near the tRNA binding site of the peptidyltransferase center. The chain is Large ribosomal subunit protein uL6 from Bdellovibrio bacteriovorus (strain ATCC 15356 / DSM 50701 / NCIMB 9529 / HD100).